Reading from the N-terminus, the 355-residue chain is Meiotic coiled-coil protein 4 (355 aa).

Residues 298 to 338 (QRLSRTEINKEIIEIEKLELEVVQFQMSIANLINTQVEVTN) are a coiled coil.

It is found in the cytoplasm. Functionally, has a role in meiosis. This is Meiotic coiled-coil protein 4 (mcp4) from Schizosaccharomyces pombe (strain 972 / ATCC 24843) (Fission yeast).